Reading from the N-terminus, the 389-residue chain is Aspartic protease 6 (389 aa).

Residues 1–15 (MKTFILLAVLGLASA) form the signal peptide. The Peptidase A1 domain occupies 71–384 (YLGNITIGTP…DIGNKRMGFA (314 aa)). The N-linked (GlcNAc...) asparagine glycan is linked to Asn74. Asp89 is a catalytic residue. Cys102 and Cys106 are joined by a disulfide. The active site involves Asp277. A disulfide bridge connects residues Cys312 and Cys344.

It belongs to the peptidase A1 family. Glycosylated. Has phosphorylcholine-substituted oligosaccharide N-glycans. Expressed in intestine, muscles, pharynx and hypodermis.

The protein resides in the secreted. Functionally, aspartic protease. The sequence is that of Aspartic protease 6 from Caenorhabditis elegans.